Reading from the N-terminus, the 240-residue chain is Ribitol-5-phosphate cytidylyltransferase (240 aa).

CTP-binding positions include 8–11 and 81–87; these read FAGG and GETGQMS.

Belongs to the IspD/TarI cytidylyltransferase family. TarI subfamily.

It catalyses the reaction D-ribitol 5-phosphate + CTP + H(+) = CDP-L-ribitol + diphosphate. It participates in cell wall biogenesis; poly(ribitol phosphate) teichoic acid biosynthesis. Its function is as follows. Catalyzes the transfer of the cytidylyl group of CTP to D-ribitol 5-phosphate. This chain is Ribitol-5-phosphate cytidylyltransferase, found in Streptococcus agalactiae serotype V (strain ATCC BAA-611 / 2603 V/R).